The following is a 443-amino-acid chain: Ribosomal protein uS12 methylthiotransferase RimO (443 aa).

The MTTase N-terminal domain occupies 10–120 (PRVGFVSLGC…VMAAVHAQCP (111 aa)). [4Fe-4S] cluster-binding residues include Cys-19, Cys-55, Cys-84, Cys-152, Cys-156, and Cys-159. Residues 138-375 (LTPRHYAYLK…MALQAEISAR (238 aa)) enclose the Radical SAM core domain. Residues 378–443 (ARRVGTECTV…DEHDLYGRVL (66 aa)) form the TRAM domain.

This sequence belongs to the methylthiotransferase family. RimO subfamily. [4Fe-4S] cluster is required as a cofactor.

The protein localises to the cytoplasm. It carries out the reaction L-aspartate(89)-[ribosomal protein uS12]-hydrogen + (sulfur carrier)-SH + AH2 + 2 S-adenosyl-L-methionine = 3-methylsulfanyl-L-aspartate(89)-[ribosomal protein uS12]-hydrogen + (sulfur carrier)-H + 5'-deoxyadenosine + L-methionine + A + S-adenosyl-L-homocysteine + 2 H(+). Its function is as follows. Catalyzes the methylthiolation of an aspartic acid residue of ribosomal protein uS12. This Alkalilimnicola ehrlichii (strain ATCC BAA-1101 / DSM 17681 / MLHE-1) protein is Ribosomal protein uS12 methylthiotransferase RimO.